Reading from the N-terminus, the 118-residue chain is Small ribosomal subunit protein uS13 (118 aa).

The disordered stretch occupies residues 94 to 118; that stretch reads SLPLRGQRTKTNARTRKGPRKPIKK.

The protein belongs to the universal ribosomal protein uS13 family. In terms of assembly, part of the 30S ribosomal subunit. Forms a loose heterodimer with protein S19. Forms two bridges to the 50S subunit in the 70S ribosome.

Located at the top of the head of the 30S subunit, it contacts several helices of the 16S rRNA. In the 70S ribosome it contacts the 23S rRNA (bridge B1a) and protein L5 of the 50S subunit (bridge B1b), connecting the 2 subunits; these bridges are implicated in subunit movement. Contacts the tRNAs in the A and P-sites. The sequence is that of Small ribosomal subunit protein uS13 from Vibrio cholerae serotype O1 (strain ATCC 39315 / El Tor Inaba N16961).